The chain runs to 26 residues: Histone H2B.1, sperm (26 aa).

A disordered region spans residues 1 to 26 (MPSQKSPTKRSPTKRSPQKGGKGAKR). 3 consecutive short sequence motifs (SPKK motif) follow at residues 6 to 9 (SPTK), 11 to 14 (SPTK), and 16 to 19 (SPQK). The span at 7 to 26 (PTKRSPTKRSPQKGGKGAKR) shows a compositional bias: basic residues. Phosphoserine occurs at positions 11 and 16.

It belongs to the histone H2B family. As to quaternary structure, the nucleosome is a histone octamer containing two molecules each of H2A, H2B, H3 and H4 assembled in one H3-H4 heterotetramer and two H2A-H2B heterodimers. The octamer wraps approximately 147 bp of DNA. Monoubiquitination gives a specific tag for epigenetic transcriptional activation and is also prerequisite for histone H3 'Lys-4' and 'Lys-79' methylation. Post-translationally, phosphorylated on SPKK motifs 2 and 3; which may regulate DNA binding. Dephosphorylated during maturation of spermatids to mature sperm and rephosphorylated at fertilization.

It localises to the nucleus. Its subcellular location is the chromosome. Core component of nucleosome. Nucleosomes wrap and compact DNA into chromatin, limiting DNA accessibility to the cellular machineries which require DNA as a template. Histones thereby play a central role in transcription regulation, DNA repair, DNA replication and chromosomal stability. DNA accessibility is regulated via a complex set of post-translational modifications of histones, also called histone code, and nucleosome remodeling. This Echinus esculentus (Sea urchin) protein is Histone H2B.1, sperm.